A 210-amino-acid chain; its full sequence is Thymidylate kinase (210 aa).

10 to 17 (GLEGAGKT) contributes to the ATP binding site.

This sequence belongs to the thymidylate kinase family.

The enzyme catalyses dTMP + ATP = dTDP + ADP. Functionally, phosphorylation of dTMP to form dTDP in both de novo and salvage pathways of dTTP synthesis. This is Thymidylate kinase from Erwinia tasmaniensis (strain DSM 17950 / CFBP 7177 / CIP 109463 / NCPPB 4357 / Et1/99).